Reading from the N-terminus, the 376-residue chain is Respiration factor 1 (376 aa).

Disordered stretches follow at residues 1–23 (MKDLNPEMGKFATTKGPPQDNRG), 88–107 (VNVTHDESLPLGTIESNSTK), 258–279 (FKEKKKKKKGDVNGNHPETGSS), and 347–376 (GVNELEHNSSNLNNSNSGTPHNHNQNQHTN). The segment covering 354–376 (NSSNLNNSNSGTPHNHNQNQHTN) has biased composition (low complexity).

The protein resides in the cytoplasm. It is found in the nucleus. It localises to the mitochondrion. Functionally, mitochondrial and nuclear transcriptional activator required for respiratory growth. This is Respiration factor 1 (RSF1) from Saccharomyces cerevisiae (strain YJM789) (Baker's yeast).